Consider the following 1603-residue polypeptide: Vitellogenin-4 (1603 aa).

A signal peptide spans 1–15 (MKSIIIASLVALAIA). A Vitellogenin domain is found at 24-685 (FSPKSEYVYK…EKNAFLPKEV (662 aa)). A glycan (N-linked (GlcNAc...) asparagine) is linked at Asn1266. In terms of domain architecture, VWFD spans 1306-1475 (ATCKVDQSEV…SYLLKNEECE (170 aa)). Disulfide bonds link Cys1308-Cys1438 and Cys1330-Cys1474.

As to expression, expressed in the intestine of adult hermaphrodites.

It localises to the secreted. Its function is as follows. Precursor of the egg-yolk proteins that are sources of nutrients during embryonic development. Together with other vitellogenins, may play a role in modulating life-span, acting via induction of autophagy and lysosomal lipolysis. This is Vitellogenin-4 (vit-4) from Caenorhabditis elegans.